Reading from the N-terminus, the 543-residue chain is Carboxypeptidase Y homolog A (543 aa).

The signal sequence occupies residues 1 to 17 (MKFLTTGLLATAALAAA). A propeptide spanning residues 18–124 (QEQHVLQAED…KLHNYDLRVK (107 aa)) is cleaved from the precursor. Disulfide bonds link C179-C419, C313-C327, C337-C360, C344-C353, and C382-C389. N210 carries an N-linked (GlcNAc...) asparagine glycan. Residue S266 is part of the active site. D458 is a catalytic residue. N509 carries N-linked (GlcNAc...) asparagine glycosylation. H520 is an active-site residue.

The protein belongs to the peptidase S10 family.

It localises to the vacuole. The catalysed reaction is Release of a C-terminal amino acid with broad specificity.. Its function is as follows. Vacuolar carboxypeptidase involved in degradation of small peptides. Digests preferentially peptides containing an aliphatic or hydrophobic residue in P1' position, as well as methionine, leucine or phenylalanine in P1 position of ester substrate. This chain is Carboxypeptidase Y homolog A (cpyA), found in Trichophyton verrucosum (strain HKI 0517).